The primary structure comprises 122 residues: Putative TLX1 neighbor protein (122 aa).

The segment at 21-122 (SLLSQEAMGP…LGGGRGQRGQ (102 aa)) is disordered. Positions 113-122 (LGGGRGQRGQ) are enriched in gly residues.

The sequence is that of Putative TLX1 neighbor protein (TLX1NB) from Homo sapiens (Human).